The sequence spans 389 residues: Stilbene synthase 3 (389 aa).

Residue 55 to 58 (KFQR) coordinates substrate. Residue C164 is part of the active site. Substrate-binding positions include L267 and 305-307 (GGR).

This sequence belongs to the thiolase-like superfamily. Chalcone/stilbene synthases family. In terms of assembly, homodimer.

It localises to the cytoplasm. It carries out the reaction 4-coumaroyl-CoA + 3 malonyl-CoA + 3 H(+) = trans-resveratrol + 4 CO2 + 4 CoA. Its pathway is phytoalexin biosynthesis; 3,4',5-trihydroxystilbene biosynthesis; 3,4',5-trihydroxystilbene from trans-4-coumarate: step 2/2. In Arachis hypogaea (Peanut), this protein is Stilbene synthase 3.